The primary structure comprises 440 residues: Thymidine phosphorylase (440 aa).

Belongs to the thymidine/pyrimidine-nucleoside phosphorylase family. Homodimer.

It catalyses the reaction thymidine + phosphate = 2-deoxy-alpha-D-ribose 1-phosphate + thymine. The protein operates within pyrimidine metabolism; dTMP biosynthesis via salvage pathway; dTMP from thymine: step 1/2. In terms of biological role, the enzymes which catalyze the reversible phosphorolysis of pyrimidine nucleosides are involved in the degradation of these compounds and in their utilization as carbon and energy sources, or in the rescue of pyrimidine bases for nucleotide synthesis. The protein is Thymidine phosphorylase of Salmonella arizonae (strain ATCC BAA-731 / CDC346-86 / RSK2980).